The chain runs to 336 residues: Anthranilate phosphoribosyltransferase (336 aa).

5-phospho-alpha-D-ribose 1-diphosphate is bound by residues Gly82, 85–86 (GD), Thr90, 92–95 (NIST), 110–118 (KHGNRSVSS), and Ser122. Gly82 contributes to the anthranilate binding site. Ser94 serves as a coordination point for Mg(2+). Position 113 (Asn113) interacts with anthranilate. Anthranilate is bound at residue Arg168. Asp227 and Glu228 together coordinate Mg(2+).

Belongs to the anthranilate phosphoribosyltransferase family. As to quaternary structure, homodimer. Requires Mg(2+) as cofactor.

The catalysed reaction is N-(5-phospho-beta-D-ribosyl)anthranilate + diphosphate = 5-phospho-alpha-D-ribose 1-diphosphate + anthranilate. The protein operates within amino-acid biosynthesis; L-tryptophan biosynthesis; L-tryptophan from chorismate: step 2/5. Its function is as follows. Catalyzes the transfer of the phosphoribosyl group of 5-phosphorylribose-1-pyrophosphate (PRPP) to anthranilate to yield N-(5'-phosphoribosyl)-anthranilate (PRA). This Leptospira interrogans serogroup Icterohaemorrhagiae serovar copenhageni (strain Fiocruz L1-130) protein is Anthranilate phosphoribosyltransferase.